The following is a 140-amino-acid chain: Large ribosomal subunit protein mL43 (140 aa).

This sequence belongs to the mitochondrion-specific ribosomal protein mL43 family. As to quaternary structure, component of the mitochondrial large ribosomal subunit (mt-LSU). Mature yeast 74S mitochondrial ribosomes consist of a small (37S) and a large (54S) subunit. The 37S small subunit contains a 15S ribosomal RNA (15S mt-rRNA) and 34 different proteins. The 54S large subunit contains a 21S rRNA (21S mt-rRNA) and 46 different proteins.

The protein localises to the mitochondrion. In terms of biological role, component of the mitochondrial ribosome (mitoribosome), a dedicated translation machinery responsible for the synthesis of mitochondrial genome-encoded proteins, including at least some of the essential transmembrane subunits of the mitochondrial respiratory chain. The mitoribosomes are attached to the mitochondrial inner membrane and translation products are cotranslationally integrated into the membrane. Also has an extraribosomal function, being essential for mitochondrial genome integrity. May interact with MHR1 to take part in the mtDNA repair mechanism. In Saccharomyces cerevisiae (strain ATCC 204508 / S288c) (Baker's yeast), this protein is Large ribosomal subunit protein mL43 (MRPL51).